The following is a 120-amino-acid chain: MKRYVCSTFVACVMVLCVIPASGAAAHEAVAEDAGNRIAAPACVHFTADWRYTFVTNDCSIDYSVTVAYGDGTDVPCRSANPGDILTFPGYGTRGNEVLGAVLCATDGSALPVDRERAVR.

A signal peptide spans 1-32 (MKRYVCSTFVACVMVLCVIPASGAAAHEAVAE). 2 disulfides stabilise this stretch: cysteine 43–cysteine 59 and cysteine 77–cysteine 104.

Inhibits mammalian alpha-amylases specifically but has no action on plant and microbial alpha-amylases. The chain is Alpha-amylase inhibitor Haim-2 from Streptomyces griseosporeus.